The sequence spans 655 residues: E3 ubiquitin-protein ligase TRIM32 (655 aa).

The segment at Cys-21–Ser-66 adopts an RING-type zinc-finger fold. Ser-56 is subject to Phosphoserine; by CHEK2. Residues Val-96 to Val-139 form a B box-type; atypical zinc finger. Positions 101, 104, 124, and 129 each coordinate Zn(2+). The stretch at Val-139–Glu-198 forms a coiled coil. A disordered region spans residues Met-327–Ser-347. Ser-330, Ser-337, and Ser-341 each carry phosphoserine. NHL repeat units lie at residues Leu-360–Lys-403, Asp-417–Asp-460, Gly-461–Asp-501, Gly-564–Gly-607, and Gly-608–His-648.

Belongs to the TRIM/RBCC family. It self-associates. Interacts with DTNBP1. Interacts with PIAS4/PIASY upon treatment with UVB and TNF-alpha. Interacts with AMBRA1; promoting activation of ULK1 through unanchored 'Lys-63'-linked polyubiquitin chains. Interacts with TICAM1 and TAX1BP1; these interactions target TICAM1 to TAX1BP1-mediated selective autophagic degradation. Post-translationally, ubiquitinated. Phosphorylation at Ser-56 by CHEK2 under oxidative stress, activates the E3 ligase activity and promotes ATG7 ubiquitination leading to positive regulation of the autophagosme assembly. In terms of tissue distribution, ubiquitous. High expression in brain.

It localises to the cytoplasm. The catalysed reaction is S-ubiquitinyl-[E2 ubiquitin-conjugating enzyme]-L-cysteine + [acceptor protein]-L-lysine = [E2 ubiquitin-conjugating enzyme]-L-cysteine + N(6)-ubiquitinyl-[acceptor protein]-L-lysine.. Its pathway is protein modification; protein ubiquitination. E3 ubiquitin ligase that plays a role in various biological processes including neural stem cell differentiation, innate immunity, inflammatory resonse and autophagy. Plays a role in virus-triggered induction of IFN-beta and TNF-alpha by mediating the ubiquitination of STING1. Mechanistically, targets STING1 for 'Lys-63'-linked ubiquitination which promotes the interaction of STING1 with TBK1. Regulates bacterial clearance and promotes autophagy in Mycobacterium tuberculosis-infected macrophages. Negatively regulates TLR3/4-mediated innate immune and inflammatory response by triggering the autophagic degradation of TICAM1 in an E3 activity-independent manner. Plays an essential role in oxidative stress induced cell death by inducing loss of transmembrane potential and enhancing mitochondrial reactive oxygen species (ROS) production during oxidative stress conditions. Ubiquitinates XIAP and targets it for proteasomal degradation. Ubiquitinates DTNBP1 (dysbindin) and promotes its degradation. May ubiquitinate BBS2. Ubiquitinates PIAS4/PIASY and promotes its degradation in keratinocytes treated with UVB and TNF-alpha. Also acts as a regulator of autophagy by mediating formation of unanchored 'Lys-63'-linked polyubiquitin chains that activate ULK1: interaction with AMBRA1 is required for ULK1 activation. Positively regulates dendritic branching by promoting ubiquitination and subsequent degradation of the epigenetic factor CDYL. Under metabolic stress and phosphorylation by CHK2, mediates 'Lys-63'-linked ubiquitination of ATG7 at 'Lys-41' to initiate autophagy. This is E3 ubiquitin-protein ligase TRIM32 from Mus musculus (Mouse).